Here is a 383-residue protein sequence, read N- to C-terminus: Na(+)/H(+) antiporter NhaA (383 aa).

The next 11 helical transmembrane spans lie at 14–34, 47–67, 87–107, 117–137, 146–166, 171–191, 205–225, 252–272, 280–300, 321–341, and 356–376; these read AGGI…NSPL, FGMS…FLLI, IFPA…YVAF, GWAI…ALLG, VFLL…IALF, LSTM…MLNA, AILW…GVVI, VAFG…LEGV, MLPL…IFTF, IFAV…ISSL, and LGIL…LHFS.

This sequence belongs to the NhaA Na(+)/H(+) (TC 2.A.33) antiporter family.

Its subcellular location is the cell inner membrane. It carries out the reaction Na(+)(in) + 2 H(+)(out) = Na(+)(out) + 2 H(+)(in). Functionally, na(+)/H(+) antiporter that extrudes sodium in exchange for external protons. In Vibrio alginolyticus, this protein is Na(+)/H(+) antiporter NhaA.